Reading from the N-terminus, the 163-residue chain is 3-dehydroquinate dehydratase (163 aa).

Y28 acts as the Proton acceptor in catalysis. Substrate contacts are provided by N80, H86, and D93. The active-site Proton donor is the H106. Residues 107–108 (IS) and R117 each bind substrate.

This sequence belongs to the type-II 3-dehydroquinase family. Homododecamer.

It carries out the reaction 3-dehydroquinate = 3-dehydroshikimate + H2O. It participates in metabolic intermediate biosynthesis; chorismate biosynthesis; chorismate from D-erythrose 4-phosphate and phosphoenolpyruvate: step 3/7. Its function is as follows. Catalyzes a trans-dehydration via an enolate intermediate. The polypeptide is 3-dehydroquinate dehydratase (Bradyrhizobium sp. (strain BTAi1 / ATCC BAA-1182)).